The sequence spans 361 residues: Methionine import ATP-binding protein MetN (361 aa).

The ABC transporter domain maps to 22-257; it reads VRLIDVKRRF…PQTDITRSLL (236 aa). 54 to 61 is an ATP binding site; the sequence is GRSGAGKS.

The protein belongs to the ABC transporter superfamily. Methionine importer (TC 3.A.1.24) family. The complex is composed of two ATP-binding proteins (MetN), two transmembrane proteins (MetI) and a solute-binding protein (MetQ).

It is found in the cell inner membrane. It catalyses the reaction L-methionine(out) + ATP + H2O = L-methionine(in) + ADP + phosphate + H(+). It carries out the reaction D-methionine(out) + ATP + H2O = D-methionine(in) + ADP + phosphate + H(+). In terms of biological role, part of the ABC transporter complex MetNIQ involved in methionine import. Responsible for energy coupling to the transport system. This is Methionine import ATP-binding protein MetN from Rhizobium etli (strain ATCC 51251 / DSM 11541 / JCM 21823 / NBRC 15573 / CFN 42).